Reading from the N-terminus, the 836-residue chain is Ethylene receptor 3 (836 aa).

The next 3 helical transmembrane spans lie at 137–157 (LIAA…AGLR), 166–186 (LVQF…TAFT), and 204–224 (LTAL…PQLL). Cu cation is bound by residues cysteine 176 and histidine 180. Residues 269-413 (DRHTVLYTTL…VVAGQVAVAL (145 aa)) form the GAF domain. Residues 416 to 452 (ATLLEESRAMRDRLAEQNRELLQARRDALMANEARQA) are a coiled coil. Residues 457-691 (MSQGMRRPIH…LVLRFQLQSP (235 aa)) form the Histidine kinase domain. One can recognise a Response regulatory domain in the interval 718-834 (LLIDDDDDIN…LKDELARILQ (117 aa)).

Belongs to the ethylene receptor family. Requires Cu cation as cofactor.

Its subcellular location is the endoplasmic reticulum membrane. The catalysed reaction is ATP + protein L-histidine = ADP + protein N-phospho-L-histidine.. In terms of biological role, ethylene receptor related to bacterial two-component regulators. Acts as a negative regulator of ethylene signaling. May delay the transition from the vegetative stage to the floral stage by up-regulating GI (GIGANTEA) and RCN1 and cause starch accumulation in stems by down-regulating the alpha-amylase AMY3D. This chain is Ethylene receptor 3, found in Oryza sativa subsp. indica (Rice).